The following is a 117-amino-acid chain: Snaclec CHH-B subunit beta (117 aa).

Intrachain disulfides connect Cys-2–Cys-13, Cys-30–Cys-115, and Cys-92–Cys-107. One can recognise a C-type lectin domain in the interval 9–116; sequence YEGHCYRVFQ…CSKTHNVVCK (108 aa).

It belongs to the snaclec family. In terms of assembly, heterodimer of subunits alpha and beta; disulfide-linked. Expressed by the venom gland.

The protein localises to the secreted. In terms of biological role, binds to the subunit GPIbalpha (GP1BA) of the platelet GPIb/V/IX receptor system. It inhibits ristocetin- and vWF-induced platelet aggregation in platelet-rich plasma by inhibiting the binding of vWF to GPIbalpha. This chain is Snaclec CHH-B subunit beta, found in Crotalus horridus (Timber rattlesnake).